Here is an 85-residue protein sequence, read N- to C-terminus: Cell division topological specificity factor (85 aa).

Belongs to the MinE family.

Functionally, prevents the cell division inhibition by proteins MinC and MinD at internal division sites while permitting inhibition at polar sites. This ensures cell division at the proper site by restricting the formation of a division septum at the midpoint of the long axis of the cell. This Shewanella baltica (strain OS223) protein is Cell division topological specificity factor.